A 268-amino-acid chain; its full sequence is Tryptophan synthase alpha chain (268 aa).

Catalysis depends on proton acceptor residues Glu47 and Asp58.

It belongs to the TrpA family. Tetramer of two alpha and two beta chains.

Its subcellular location is the plastid. The protein localises to the chloroplast. The catalysed reaction is (1S,2R)-1-C-(indol-3-yl)glycerol 3-phosphate + L-serine = D-glyceraldehyde 3-phosphate + L-tryptophan + H2O. Its pathway is amino-acid biosynthesis; L-tryptophan biosynthesis; L-tryptophan from chorismate: step 5/5. Its function is as follows. The alpha subunit is responsible for the aldol cleavage of indoleglycerol phosphate to indole and glyceraldehyde 3-phosphate. This Gracilaria tenuistipitata var. liui (Red alga) protein is Tryptophan synthase alpha chain.